The primary structure comprises 320 residues: Malate dehydrogenase (320 aa).

NAD(+) is bound by residues Gly-10–Gly-15 and Asp-34. Arg-83 and Arg-89 together coordinate substrate. NAD(+) is bound by residues Asn-96 and Ile-119–Asn-121. Substrate is bound by residues Asn-121 and Arg-152. The Proton acceptor role is filled by His-176.

This sequence belongs to the LDH/MDH superfamily. MDH type 3 family.

The catalysed reaction is (S)-malate + NAD(+) = oxaloacetate + NADH + H(+). Functionally, catalyzes the reversible oxidation of malate to oxaloacetate. This Rhizobium etli (strain CIAT 652) protein is Malate dehydrogenase.